We begin with the raw amino-acid sequence, 241 residues long: 3-dehydroquinate dehydratase (241 aa).

Residues 35–37 (ELR) and Arg-70 contribute to the 3-dehydroquinate site. The active-site Proton donor/acceptor is His-133. The active-site Schiff-base intermediate with substrate is Lys-160. 3-dehydroquinate-binding residues include Arg-202 and Gln-225.

This sequence belongs to the type-I 3-dehydroquinase family. As to quaternary structure, homodimer.

It carries out the reaction 3-dehydroquinate = 3-dehydroshikimate + H2O. It participates in metabolic intermediate biosynthesis; chorismate biosynthesis; chorismate from D-erythrose 4-phosphate and phosphoenolpyruvate: step 3/7. In terms of biological role, involved in the third step of the chorismate pathway, which leads to the biosynthesis of aromatic amino acids. Catalyzes the cis-dehydration of 3-dehydroquinate (DHQ) and introduces the first double bond of the aromatic ring to yield 3-dehydroshikimate. The sequence is that of 3-dehydroquinate dehydratase from Staphylococcus haemolyticus (strain JCSC1435).